Consider the following 177-residue polypeptide: Large ribosomal subunit protein uL6 (177 aa).

This sequence belongs to the universal ribosomal protein uL6 family. Part of the 50S ribosomal subunit.

In terms of biological role, this protein binds to the 23S rRNA, and is important in its secondary structure. It is located near the subunit interface in the base of the L7/L12 stalk, and near the tRNA binding site of the peptidyltransferase center. The protein is Large ribosomal subunit protein uL6 of Polaromonas naphthalenivorans (strain CJ2).